A 78-amino-acid chain; its full sequence is Small ribosomal subunit protein bS18 (78 aa).

The protein belongs to the bacterial ribosomal protein bS18 family. In terms of assembly, part of the 30S ribosomal subunit. Forms a tight heterodimer with protein bS6.

Functionally, binds as a heterodimer with protein bS6 to the central domain of the 16S rRNA, where it helps stabilize the platform of the 30S subunit. The polypeptide is Small ribosomal subunit protein bS18 (Kocuria rhizophila (strain ATCC 9341 / DSM 348 / NBRC 103217 / DC2201)).